The following is a 401-amino-acid chain: Nicotinate phosphoribosyltransferase (401 aa).

His-221 is subject to Phosphohistidine; by autocatalysis.

Belongs to the NAPRTase family. In terms of processing, transiently phosphorylated on a His residue during the reaction cycle. Phosphorylation strongly increases the affinity for substrates and increases the rate of nicotinate D-ribonucleotide production. Dephosphorylation regenerates the low-affinity form of the enzyme, leading to product release.

It catalyses the reaction nicotinate + 5-phospho-alpha-D-ribose 1-diphosphate + ATP + H2O = nicotinate beta-D-ribonucleotide + ADP + phosphate + diphosphate. Its pathway is cofactor biosynthesis; NAD(+) biosynthesis; nicotinate D-ribonucleotide from nicotinate: step 1/1. In terms of biological role, catalyzes the synthesis of beta-nicotinate D-ribonucleotide from nicotinate and 5-phospho-D-ribose 1-phosphate at the expense of ATP. The protein is Nicotinate phosphoribosyltransferase of Yersinia enterocolitica serotype O:8 / biotype 1B (strain NCTC 13174 / 8081).